The sequence spans 291 residues: ATP synthase gamma chain (291 aa).

Belongs to the ATPase gamma chain family. As to quaternary structure, F-type ATPases have 2 components, CF(1) - the catalytic core - and CF(0) - the membrane proton channel. CF(1) has five subunits: alpha(3), beta(3), gamma(1), delta(1), epsilon(1). CF(0) has three main subunits: a, b and c.

The protein localises to the cell inner membrane. Its function is as follows. Produces ATP from ADP in the presence of a proton gradient across the membrane. The gamma chain is believed to be important in regulating ATPase activity and the flow of protons through the CF(0) complex. The chain is ATP synthase gamma chain from Cupriavidus necator (strain ATCC 17699 / DSM 428 / KCTC 22496 / NCIMB 10442 / H16 / Stanier 337) (Ralstonia eutropha).